Reading from the N-terminus, the 195-residue chain is Nucleoside triphosphate pyrophosphatase (195 aa).

The active-site Proton acceptor is the D70.

Belongs to the Maf family. The cofactor is a divalent metal cation.

The protein resides in the cytoplasm. It catalyses the reaction a ribonucleoside 5'-triphosphate + H2O = a ribonucleoside 5'-phosphate + diphosphate + H(+). It carries out the reaction a 2'-deoxyribonucleoside 5'-triphosphate + H2O = a 2'-deoxyribonucleoside 5'-phosphate + diphosphate + H(+). In terms of biological role, nucleoside triphosphate pyrophosphatase. May have a dual role in cell division arrest and in preventing the incorporation of modified nucleotides into cellular nucleic acids. This is Nucleoside triphosphate pyrophosphatase from Synechocystis sp. (strain ATCC 27184 / PCC 6803 / Kazusa).